The chain runs to 289 residues: LysM and putative peptidoglycan-binding domain-containing protein 4 (289 aa).

The interval 1-23 (MRLREGPTHSFQPPSSVHSSLGS) is disordered. At 1-208 (MRLREGPTHS…PASGADWGIR (208 aa)) the chain is on the extracellular side. A compositionally biased stretch (polar residues) spans 9–23 (HSFQPPSSVHSSLGS). 2 N-linked (GlcNAc...) asparagine glycosylation sites follow: N30 and N59. The LysM domain maps to 71 to 115 (LERAITEDDNLNKLALQYGCKVSDIKRVNNLITDQDIYALKTIKI). N-linked (GlcNAc...) asparagine glycans are attached at residues N134 and N178. Residues 209 to 229 (WWNAVFIMLLVGIVLPVFYIV) form a helical membrane-spanning segment. The Cytoplasmic segment spans residues 230–289 (YFKTQGDSEGTFSIEGRTNVSTSLSPHTNTGHSMEQMTQRTSGFSPGLLQDTHKLLNPGG). The segment at 252–272 (SLSPHTNTGHSMEQMTQRTSG) is disordered.

It is found in the membrane. This chain is LysM and putative peptidoglycan-binding domain-containing protein 4 (lysmd4), found in Xenopus laevis (African clawed frog).